We begin with the raw amino-acid sequence, 550 residues long: Chaperonin GroEL (550 aa).

Residues 30–33, Lys51, 87–91, Gly415, and Asp496 contribute to the ATP site; these read TLGP and DGTTT.

This sequence belongs to the chaperonin (HSP60) family. As to quaternary structure, forms a cylinder of 14 subunits composed of two heptameric rings stacked back-to-back. Interacts with the co-chaperonin GroES.

It localises to the cytoplasm. It carries out the reaction ATP + H2O + a folded polypeptide = ADP + phosphate + an unfolded polypeptide.. Together with its co-chaperonin GroES, plays an essential role in assisting protein folding. The GroEL-GroES system forms a nano-cage that allows encapsulation of the non-native substrate proteins and provides a physical environment optimized to promote and accelerate protein folding. The protein is Chaperonin GroEL of Rickettsia prowazekii (strain Madrid E).